A 505-amino-acid chain; its full sequence is MESGPAVCCQDPRAELVDRVAAINVAHLEEADEGPEPARNGVDPPPRARAASVIPGSASRPTPVRPSLSARKFSLQERPAGSCLGAQVGPYSTGPASHISPRSWRRPTIESHRVAISDTEDCVQLNQYKLQSEIGKGAYGVVRLAYNESEDRHYAMKVLSKKKLLKQYGFPRRPPPRGSQATQGGPAKQLLPLERVYQEIAILKKLDHVNVVKLIEVLDDPAEDNLYLVFDLLRKGPVMEVPCDKPFPEEQARLYLRDIILGLEYLHCQKIVHRDIKPSNLLLGDDGHVKIADFGVSNQFEGNDAQLSSTAGTPAFMAPEAISDSGQSFSGKALDVWATGVTLYCFVYGKCPFIDDYILTLHRKIKNEAVVFPEEPEVSEDLKDLILRMLDKNPETRIGVSDIKLHPWVTKHGEEPLPSEEEHCSVVEVTEEEVKNSVRLIPSWTTVILVKSMLRKRSFGNPFEPQARREERSMSAPGSLLMKEGCGEGCKSPELPGVQEDEAAS.

Residues 28 to 66 (LEEADEGPEPARNGVDPPPRARAASVIPGSASRPTPVRP) form a disordered region. S67 and S74 each carry phosphoserine. R78 carries the asymmetric dimethylarginine modification. The tract at residues 84–105 (LGAQVGPYSTGPASHISPRSWR) is disordered. The residue at position 100 (S100) is a Phosphoserine. T108 bears the Phosphothreonine mark. Residues 128-409 (YKLQSEIGKG…VSDIKLHPWV (282 aa)) enclose the Protein kinase domain. Residues 134 to 142 (IGKGAYGVV) and K157 contribute to the ATP site. The interval 167–189 (QYGFPRRPPPRGSQATQGGPAKQ) is RP domain. The active-site Proton acceptor is the D275. The autoinhibitory domain stretch occupies residues 435-440 (KNSVRL). The tract at residues 438–463 (VRLIPSWTTVILVKSMLRKRSFGNPF) is calmodulin-binding. S458, S475, and S492 each carry phosphoserine. The interval 460-505 (GNPFEPQARREERSMSAPGSLLMKEGCGEGCKSPELPGVQEDEAAS) is disordered.

Belongs to the protein kinase superfamily. Ser/Thr protein kinase family. In terms of assembly, interacts with CAMK4 and calmodulin. Post-translationally, appears to be autophosphorylated in a Ca(2+)/calmodulin-dependent manner. Phosphorylated at multiple sites by PRCAKA/PKA. Phosphorylation of Ser-458 is blocked upon binding to Ca(2+)/calmodulin. In vitro, phosphorylated by CAMK1 and CAMK4. Widely expressed. Differentially expressed in various brain regions.

It localises to the cytoplasm. The protein localises to the nucleus. It carries out the reaction L-seryl-[protein] + ATP = O-phospho-L-seryl-[protein] + ADP + H(+). It catalyses the reaction L-threonyl-[protein] + ATP = O-phospho-L-threonyl-[protein] + ADP + H(+). With respect to regulation, activated by Ca(2+)/calmodulin. Binding of calmodulin may relieve intrasteric autoinhibition. Partially inhibited upon phosphorylation by PRCAKA/PKA. May be regulated through phosphorylation by CAMK1 and CAMK4. Functionally, calcium/calmodulin-dependent protein kinase that belongs to a proposed calcium-triggered signaling cascade involved in a number of cellular processes. Phosphorylates CAMK1, CAMK1D, CAMK1G and CAMK4. Involved in regulating cell apoptosis. Promotes cell survival by phosphorylating AKT1/PKB that inhibits pro-apoptotic BAD/Bcl2-antagonist of cell death. This chain is Calcium/calmodulin-dependent protein kinase kinase 1 (Camkk1), found in Mus musculus (Mouse).